The following is a 485-amino-acid chain: Two-component response regulator ORR31 (485 aa).

The 126-residue stretch at 13–138 folds into the Response regulatory domain; it reads RVMPVDGDTK…TMAQLWRVVA (126 aa). Residue D66 is modified to 4-aspartylphosphate. The segment covering 195–204 has biased composition (polar residues); it reads LTINVDSGSS. The interval 195–236 is disordered; the sequence is LTINVDSGSSDGADANPRQKLEHKKDAKGPLGQHVASHLQPQ. The segment covering 211–222 has biased composition (basic and acidic residues); sequence PRQKLEHKKDAK.

It belongs to the ARR family. Type-B subfamily. Two-component system major event consists of a His-to-Asp phosphorelay between a sensor histidine kinase (HK) and a response regulator (RR). In plants, the His-to-Asp phosphorelay involves an additional intermediate named Histidine-containing phosphotransfer protein (HPt). This multistep phosphorelay consists of a His-Asp-His-Asp sequential transfer of a phosphate group between first a His and an Asp of the HK protein, followed by the transfer to a conserved His of the HPt protein and finally the transfer to an Asp in the receiver domain of the RR protein.

Functionally, functions as a response regulator involved in His-to-Asp phosphorelay signal transduction system. Phosphorylation of the Asp residue in the receiver domain activates the ability of the protein to promote the transcription of target genes. May directly activate some type-A response regulators in response to cytokinins. This is Two-component response regulator ORR31 from Oryza sativa subsp. japonica (Rice).